A 230-amino-acid chain; its full sequence is MIIMISVILVNPKYSGNVGSIARVMMNFGFEELRIVGDKSIINNEAYMMAVHAREILDNAKFYNTFDEAIGDLDFVIATSGARGGDRNLKRVPITPKELADKILEVKGNIGIVFGREDDGLRNEEIDKCDLLVSIPTSEKYPIMNLSHAVAVILYEIYTKKVRNKFLDINMREASKEDKELLIRKFNEFIDKNEKIPEHKKELCKIIFKRLVNRAFISGKEAWTLMSAFK.

S-adenosyl-L-methionine contacts are provided by residues 79–81 (TSG), glycine 115, isoleucine 135, and 142–144 (PIM).

Belongs to the class IV-like SAM-binding methyltransferase superfamily. RNA methyltransferase TrmH family. As to quaternary structure, homodimer.

The protein resides in the cytoplasm. The enzyme catalyses cytidine(32) in tRNA + S-adenosyl-L-methionine = 2'-O-methylcytidine(32) in tRNA + S-adenosyl-L-homocysteine + H(+). Catalyzes the formation of 2'O-methylated cytidine (Cm32) at position 32 in tRNA. The chain is tRNA (cytidine-2'-O-)-methyltransferase TrmJ from Methanocaldococcus jannaschii (strain ATCC 43067 / DSM 2661 / JAL-1 / JCM 10045 / NBRC 100440) (Methanococcus jannaschii).